The primary structure comprises 805 residues: Leucine--tRNA ligase (805 aa).

Positions 40–51 match the 'HIGH' region motif; that stretch reads PYPSGSGLHVGH. The short motif at 576–580 is the 'KMSKS' region element; that stretch reads KMSKS. Lys579 is an ATP binding site.

It belongs to the class-I aminoacyl-tRNA synthetase family.

The protein localises to the cytoplasm. It catalyses the reaction tRNA(Leu) + L-leucine + ATP = L-leucyl-tRNA(Leu) + AMP + diphosphate. The polypeptide is Leucine--tRNA ligase (Chlorobium phaeovibrioides (strain DSM 265 / 1930) (Prosthecochloris vibrioformis (strain DSM 265))).